The chain runs to 575 residues: Protein AUXIN SIGNALING F-BOX 2 (575 aa).

The region spanning 1-47 (MNYFPDEVIEHVFDFVTSHKDRNAISLVCKSWYKIERYSRQKVFIGN) is the F-box domain. Position 69 (Lys-69) interacts with 1D-myo-inositol hexakisphosphate. The interaction with auxin-responsive proteins stretch occupies residues 76–77 (DF). 1D-myo-inositol hexakisphosphate-binding positions include 108–109 (KR) and Arg-340. Residues 343–348 (PSDLLG) are interaction with auxin-responsive proteins. 396-398 (RFR) is a binding site for 1D-myo-inositol hexakisphosphate. Positions 400 to 404 (CILEP) are interaction with auxin-responsive proteins. Position 431 (Arg-431) interacts with 1D-myo-inositol hexakisphosphate. The segment at 459–460 (AF) is interaction with auxin-responsive proteins. Residues 479–480 (KK) and Arg-504 contribute to the 1D-myo-inositol hexakisphosphate site.

As to quaternary structure, part of a SCF (SKP1-cullin-F-box) protein ligase complex. Interacts with Aux/IAA proteins (IAA7) in an auxin-dependent manner. In terms of tissue distribution, ubiquitous, with higher levels in seedlings.

The protein localises to the nucleus. It participates in protein modification; protein ubiquitination. Its function is as follows. Component of SCF(ASK-cullin-F-box) E3 ubiquitin ligase complexes, which may mediate the ubiquitination and subsequent proteasomal degradation of target proteins. Confers sensitivity to the virulent bacterial pathogen P.syringae. Auxin receptor that mediates Aux/IAA proteins proteasomal degradation and auxin-regulated transcription. Involved in embryogenesis regulation by auxin. The polypeptide is Protein AUXIN SIGNALING F-BOX 2 (AFB2) (Arabidopsis thaliana (Mouse-ear cress)).